The sequence spans 23 residues: Dahlein-4.1 (23 aa).

As to expression, expressed by the skin dorsal glands.

The protein resides in the secreted. Functionally, has no antimicrobial activity. The polypeptide is Dahlein-4.1 (Ranoidea dahlii (Dahl's aquatic frog)).